Consider the following 228-residue polypeptide: PKHD-type hydroxylase XAC2942 (228 aa).

Positions 78 to 180 (RIYPPLFNRY…RVACFFWAQS (103 aa)) constitute a Fe2OG dioxygenase domain. Fe cation-binding residues include histidine 96, aspartate 98, and histidine 161. A 2-oxoglutarate-binding site is contributed by arginine 171.

Requires Fe(2+) as cofactor. L-ascorbate is required as a cofactor.

The protein is PKHD-type hydroxylase XAC2942 of Xanthomonas axonopodis pv. citri (strain 306).